The sequence spans 71 residues: Plasticin-C1 (71 aa).

An N-terminal signal peptide occupies residues 1–22; the sequence is MAFLKKSLLLVLFLGLVSLSIC. Residues 23-45 constitute a propeptide that is removed on maturation; the sequence is EEEKRENEDEEKQEDDDQSENKR. A disordered region spans residues 25 to 46; the sequence is EKRENEDEEKQEDDDQSENKRG. Residues 30–40 show a composition bias toward acidic residues; sequence EDEEKQEDDDQ. Asn-68 is modified (asparagine amide). The propeptide occupies 70–71; it reads ES.

The protein belongs to the frog skin active peptide (FSAP) family. Plasticin subfamily. Expressed by the skin glands.

The protein localises to the secreted. It is found in the target cell membrane. Neutral peptide with no antimicrobial activity. May act in synergy with cationic peptides by enhancing their activity. Has a moderate hemolytic activity. The protein is Plasticin-C1 of Agalychnis callidryas (Red-eyed tree frog).